The sequence spans 570 residues: CDKN2A-interacting protein (570 aa).

Ala2 is modified (N-acetylalanine). An XRN2-binding (XTBD) domain is found at 19 to 126 (VETLRCEGET…KVKKRGISSS (108 aa)). Residues 122–345 (GISSSNEGVE…TSLLMPKSSS (224 aa)) are disordered. Ser124 carries the post-translational modification Phosphoserine. Basic and acidic residues predominate over residues 147-162 (VERDHGKKSAKTDRSA). The span at 167–183 (SSGSKGSSTKSESSGTS) shows a compositional bias: low complexity. A Glycyl lysine isopeptide (Lys-Gly) (interchain with G-Cter in SUMO1) cross-link involves residue Lys176. Residues 184 to 198 (ARSNSGVSHQNSSTS) show a composition bias toward polar residues. The segment covering 203 to 221 (SVCSQSSSNSSQVTSAGSG) has biased composition (low complexity). Over residues 224 to 233 (SEPEAPDKHG) the composition is skewed to basic and acidic residues. Ser234 bears the Phosphoserine mark. Composition is skewed to low complexity over residues 234-248 (SASF…SLNS) and 271-301 (SSVS…PLLS). Residues 302 to 317 (CKSSSETASSGLTTKA) show a composition bias toward polar residues. Residues 318-345 (SSEANISSSVSKNSSSSGTSLLMPKSSS) are compositionally biased toward low complexity. A Phosphoserine modification is found at Ser378. A disordered region spans residues 383–407 (SQLASKSSSQSSTSQLPSKSTSQSS). Residues 452–527 (NHGELLNAAI…SREALKLFLK (76 aa)) enclose the DRBM domain.

It belongs to the CARF family. In terms of assembly, interacts with CDKN2A/p14ARF, p53/TP53 and MDM2. Interacts with CHEK2 and MAPK3. Interacts with XRN2. In terms of processing, may be ubiquitinated.

The protein localises to the nucleus. It is found in the nucleoplasm. Regulates DNA damage response and cell proliferation in a dose-dependent manner through a number of signaling pathways involved in cell proliferation, apoptosis and senescence. The sequence is that of CDKN2A-interacting protein (Cdkn2aip) from Rattus norvegicus (Rat).